We begin with the raw amino-acid sequence, 185 residues long: Elongation factor P (185 aa).

Belongs to the elongation factor P family.

It localises to the cytoplasm. It participates in protein biosynthesis; polypeptide chain elongation. In terms of biological role, involved in peptide bond synthesis. Stimulates efficient translation and peptide-bond synthesis on native or reconstituted 70S ribosomes in vitro. Probably functions indirectly by altering the affinity of the ribosome for aminoacyl-tRNA, thus increasing their reactivity as acceptors for peptidyl transferase. This chain is Elongation factor P, found in Burkholderia vietnamiensis (strain G4 / LMG 22486) (Burkholderia cepacia (strain R1808)).